The following is a 253-amino-acid chain: Coenzyme F420:L-glutamate ligase (253 aa).

Residues 9 to 12 (LPEI), 38 to 39 (ST), and Lys-43 contribute to the GTP site. Position 113 (Asp-113) interacts with a divalent metal cation. Asn-116 provides a ligand contact to GTP. The a divalent metal cation site is built by Asp-148, Thr-149, and Glu-206. Residue 204 to 211 (AGEGDDGT) coordinates GTP.

The protein belongs to the CofE family. As to quaternary structure, homodimer. Mg(2+) is required as a cofactor. It depends on Mn(2+) as a cofactor. Requires K(+) as cofactor.

The enzyme catalyses oxidized coenzyme F420-0 + GTP + L-glutamate = oxidized coenzyme F420-1 + GDP + phosphate + H(+). It carries out the reaction oxidized coenzyme F420-1 + GTP + L-glutamate = oxidized coenzyme F420-2 + GDP + phosphate + H(+). Its pathway is cofactor biosynthesis; coenzyme F420 biosynthesis. Functionally, catalyzes the GTP-dependent successive addition of two or more gamma-linked L-glutamates to the L-lactyl phosphodiester of 7,8-didemethyl-8-hydroxy-5-deazariboflavin (F420-0) to form coenzyme F420-0-glutamyl-glutamate (F420-2) or polyglutamated F420 derivatives. In Natronomonas pharaonis (strain ATCC 35678 / DSM 2160 / CIP 103997 / JCM 8858 / NBRC 14720 / NCIMB 2260 / Gabara) (Halobacterium pharaonis), this protein is Coenzyme F420:L-glutamate ligase.